An 862-amino-acid chain; its full sequence is Bifunctional uridylyltransferase/uridylyl-removing enzyme (862 aa).

Positions 1-328 (MSTAAIPTDA…FPRRAGAAIV (328 aa)) are uridylyltransferase. The interval 329 to 685 (INERFQAVRE…ARVSDADQGV (357 aa)) is uridylyl-removing. The 117-residue stretch at 447–563 (VDQHIMMVLR…GRFADTVGTE (117 aa)) folds into the HD domain. 2 ACT domains span residues 686-765 (QVMV…DRPS) and 794-862 (ILSL…RLHI).

It belongs to the GlnD family. Mg(2+) serves as cofactor.

The catalysed reaction is [protein-PII]-L-tyrosine + UTP = [protein-PII]-uridylyl-L-tyrosine + diphosphate. The enzyme catalyses [protein-PII]-uridylyl-L-tyrosine + H2O = [protein-PII]-L-tyrosine + UMP + H(+). Uridylyltransferase (UTase) activity is inhibited by glutamine, while glutamine activates uridylyl-removing (UR) activity. Modifies, by uridylylation and deuridylylation, the PII regulatory proteins (GlnB and homologs), in response to the nitrogen status of the cell that GlnD senses through the glutamine level. Under low glutamine levels, catalyzes the conversion of the PII proteins and UTP to PII-UMP and PPi, while under higher glutamine levels, GlnD hydrolyzes PII-UMP to PII and UMP (deuridylylation). Thus, controls uridylylation state and activity of the PII proteins, and plays an important role in the regulation of nitrogen assimilation and metabolism. This is Bifunctional uridylyltransferase/uridylyl-removing enzyme from Aromatoleum aromaticum (strain DSM 19018 / LMG 30748 / EbN1) (Azoarcus sp. (strain EbN1)).